The chain runs to 360 residues: Peptide chain release factor 1 (360 aa).

Position 236 is an N5-methylglutamine (Gln-236).

This sequence belongs to the prokaryotic/mitochondrial release factor family. In terms of processing, methylated by PrmC. Methylation increases the termination efficiency of RF1.

The protein resides in the cytoplasm. Its function is as follows. Peptide chain release factor 1 directs the termination of translation in response to the peptide chain termination codons UAG and UAA. The polypeptide is Peptide chain release factor 1 (Ligilactobacillus salivarius (strain UCC118) (Lactobacillus salivarius)).